The following is a 149-amino-acid chain: Oocyte-expressed protein homolog (149 aa).

Residues 1-22 (MVDDAGAAESQRGKQTPAHSLE) are disordered. The 62-residue stretch at 49 to 110 (PLVFYLEAWL…RVQNRVKSML (62 aa)) folds into the KH; atypical domain.

It belongs to the KHDC1 family. In terms of assembly, component of the subcortical maternal complex (SCMC), at least composed of NLRP5, KHDC3L, OOEP, and TLE6 isoform 1. Within the complex, interacts with NLRP5, KHDC3L and TLE6 isoform 1. As part of the SCMC interacts with the SCMC-associated protein NLRP4F. The SCMC may facilitate translocation of its components between the nuclear and cytoplasmic compartments. Forms a scaffold complex with KHDC3L/FILIA, and interacts with BLM and TRIM25 at DNA replication forks.

It is found in the cytoplasm. The protein resides in the nucleus. Component of the subcortical maternal complex (SCMC), a multiprotein complex that plays a key role in early embryonic development. The SCMC complex is a structural constituent of cytoplasmic lattices, which consist in fibrous structures found in the cytoplasm of oocytes and preimplantation embryos. They are required to store maternal proteins critical for embryonic development, such as proteins that control epigenetic reprogramming of the preimplantation embryo, and prevent their degradation or activation. As part of the OOEP-KHDC3 scaffold, recruits BLM and TRIM25 to DNA replication forks, thereby promoting the ubiquitination of BLM by TRIM25, enhancing BLM retainment at replication forks and therefore promoting stalled replication fork restart. Positively regulates the homologous recombination-mediated DNA double-strand break (DSB) repair pathway by regulating ATM activation and RAD51 recruitment to DSBs in oocytes. Thereby contributes to oocyte survival and the resumption and completion of meiosis. The sequence is that of Oocyte-expressed protein homolog from Homo sapiens (Human).